The chain runs to 968 residues: Angiomotin-like protein 1 (968 aa).

2 stretches are compositionally biased toward polar residues: residues 152–164 and 177–187; these read VYQSARQEPQGQE and RSTQPQQNNEE. The interval 152–258 is disordered; that stretch reads VYQSARQEPQ…NRANSGQAHK (107 aa). Low complexity predominate over residues 203–224; it reads GQQQQQQQQQQQQQQQQQQGQG. Residues Ser-253, Ser-281, and Ser-307 each carry the phosphoserine modification. The stretch at 271-291 forms a coiled coil; it reads RSLSERIMQLSLERNGAKQHL. The segment at 285–343 is disordered; sequence NGAKQHLPSSGNGKSFKAGGEPSPAQPVCKALDPRGPPPEYPFKTKPMKSPVSKNQDHG. Coiled coils occupy residues 449–645 and 676–705; these read VERA…RRLR and ALMELVREKEERILALEADMTKWEQKYLEE. Residues 721 to 742 form a disordered region; sequence AERDTTISNHSRNGSYGESSLE. The segment covering 726 to 738 has biased composition (polar residues); it reads TISNHSRNGSYGE. Ser-731 carries the post-translational modification Phosphoserine. Positions 748-773 form a coiled coil; the sequence is EEEEVVQANRRCQDMEYTIKNLHAKI. The tract at residues 785-834 is disordered; the sequence is QRSRKDAGKTDSASLRPARSVPSIAAATGTHSRQTSLTSSQLTEEKKEEK. Ser-804, Ser-816, and Ser-840 each carry phosphoserine. A compositionally biased stretch (low complexity) spans 853 to 878; the sequence is ASAPLLPTTPASALSLPASTTSASST. Residues 853–956 are disordered; that stretch reads ASAPLLPTTP…GRVSNLLHKP (104 aa). Residues Ser-912 and Ser-918 each carry the phosphoserine modification. The PDZ-binding motif lies at 965–968; it reads EVLI.

It belongs to the angiomotin family. In terms of processing, polyubiquitinated by NEDD4, leading to proteasomal degradation. Expressed in exocrine glands, including pancreas, submandibular gland, lacrimal gland, parotid gland and sublingual gland (at protein level).

The protein localises to the cell junction. Its subcellular location is the tight junction. Its function is as follows. Inhibits the Wnt/beta-catenin signaling pathway, probably by recruiting CTNNB1 to recycling endosomes and hence preventing its translocation to the nucleus. The polypeptide is Angiomotin-like protein 1 (Amotl1) (Mus musculus (Mouse)).